The chain runs to 872 residues: Alanine--tRNA ligase (872 aa).

Residues histidine 567, histidine 571, cysteine 669, and histidine 673 each contribute to the Zn(2+) site.

The protein belongs to the class-II aminoacyl-tRNA synthetase family. It depends on Zn(2+) as a cofactor.

It localises to the cytoplasm. It carries out the reaction tRNA(Ala) + L-alanine + ATP = L-alanyl-tRNA(Ala) + AMP + diphosphate. Catalyzes the attachment of alanine to tRNA(Ala) in a two-step reaction: alanine is first activated by ATP to form Ala-AMP and then transferred to the acceptor end of tRNA(Ala). Also edits incorrectly charged Ser-tRNA(Ala) and Gly-tRNA(Ala) via its editing domain. The polypeptide is Alanine--tRNA ligase (Streptococcus thermophilus (strain CNRZ 1066)).